Here is a 160-residue protein sequence, read N- to C-terminus: Protein Vago (160 aa).

Positions 1 to 23 (MESISSMIYLVAMMSLIIGGSQA) are cleaved as a signal peptide.

In terms of tissue distribution, expressed in fat body.

The protein localises to the secreted. Probably involved in the antiviral immune response. May have a role in controlling viral load in the adult fat body, after infection with viruses such as the Drosophila C virus. This is Protein Vago from Drosophila melanogaster (Fruit fly).